We begin with the raw amino-acid sequence, 394 residues long: Ribulose bisphosphate carboxylase large chain (394 aa).

Residue K5 is modified to N6,N6,N6-trimethyllysine. Positions 114 and 164 each coordinate substrate. K166 functions as the Proton acceptor in the catalytic mechanism. A substrate-binding site is contributed by K168. The Mg(2+) site is built by K192, D194, and E195. Position 192 is an N6-carboxylysine (K192). Catalysis depends on H285, which acts as the Proton acceptor. Positions 286, 318, and 370 each coordinate substrate.

The protein belongs to the RuBisCO large chain family. Type I subfamily. In terms of assembly, heterohexadecamer of 8 large chains and 8 small chains. Mg(2+) is required as a cofactor.

The protein localises to the plastid. It localises to the chloroplast. It carries out the reaction 2 (2R)-3-phosphoglycerate + 2 H(+) = D-ribulose 1,5-bisphosphate + CO2 + H2O. The catalysed reaction is D-ribulose 1,5-bisphosphate + O2 = 2-phosphoglycolate + (2R)-3-phosphoglycerate + 2 H(+). RuBisCO catalyzes two reactions: the carboxylation of D-ribulose 1,5-bisphosphate, the primary event in carbon dioxide fixation, as well as the oxidative fragmentation of the pentose substrate in the photorespiration process. Both reactions occur simultaneously and in competition at the same active site. This is Ribulose bisphosphate carboxylase large chain (rbcL) from Victoria cruziana (Santa Cruz water lily).